A 201-amino-acid chain; its full sequence is 3-isopropylmalate dehydratase small subunit (201 aa).

The protein belongs to the LeuD family. LeuD type 1 subfamily. As to quaternary structure, heterodimer of LeuC and LeuD.

It catalyses the reaction (2R,3S)-3-isopropylmalate = (2S)-2-isopropylmalate. It participates in amino-acid biosynthesis; L-leucine biosynthesis; L-leucine from 3-methyl-2-oxobutanoate: step 2/4. Functionally, catalyzes the isomerization between 2-isopropylmalate and 3-isopropylmalate, via the formation of 2-isopropylmaleate. The chain is 3-isopropylmalate dehydratase small subunit from Escherichia coli O45:K1 (strain S88 / ExPEC).